Here is a 274-residue protein sequence, read N- to C-terminus: Diaminopimelate epimerase (274 aa).

Substrate-binding residues include asparagine 13, glutamine 45, and asparagine 63. Cysteine 72 functions as the Proton donor in the catalytic mechanism. Substrate contacts are provided by residues 73–74 (GN), asparagine 158, asparagine 191, and 209–210 (ER). The Proton acceptor role is filled by cysteine 218. 219-220 (GT) contributes to the substrate binding site.

The protein belongs to the diaminopimelate epimerase family. In terms of assembly, homodimer.

It is found in the cytoplasm. It catalyses the reaction (2S,6S)-2,6-diaminopimelate = meso-2,6-diaminopimelate. Its pathway is amino-acid biosynthesis; L-lysine biosynthesis via DAP pathway; DL-2,6-diaminopimelate from LL-2,6-diaminopimelate: step 1/1. Its function is as follows. Catalyzes the stereoinversion of LL-2,6-diaminopimelate (L,L-DAP) to meso-diaminopimelate (meso-DAP), a precursor of L-lysine and an essential component of the bacterial peptidoglycan. This Pelagibacter ubique (strain HTCC1062) protein is Diaminopimelate epimerase.